The primary structure comprises 282 residues: Cell cycle checkpoint protein RAD1 (282 aa).

This sequence belongs to the rad1 family. Component of the toroidal 9-1-1 (RAD9-RAD1-HUS1) complex, composed of RAD9A, RAD1 and HUS1. The 9-1-1 complex associates with LIG1, POLB, FEN1, RAD17, HDAC1, RPA1 and RPA2. The 9-1-1 complex associates with the RAD17-RFC complex. RAD1 interacts with POLB, FEN1, HUS1, HUS1B, RAD9A and RAD9B. Interacts with DNAJC7. Interacts with RHNO1; interaction is direct. In terms of tissue distribution, expressed in testis, uterus, bladder, spleen, ovaries, lung, brain and muscle (at protein level).

The protein resides in the nucleus. Functionally, component of the 9-1-1 cell-cycle checkpoint response complex that plays a major role in DNA repair. The 9-1-1 complex is recruited to DNA lesion upon damage by the RAD17-replication factor C (RFC) clamp loader complex. Acts then as a sliding clamp platform on DNA for several proteins involved in long-patch base excision repair (LP-BER). The 9-1-1 complex stimulates DNA polymerase beta (POLB) activity by increasing its affinity for the 3'-OH end of the primer-template and stabilizes POLB to those sites where LP-BER proceeds; endonuclease FEN1 cleavage activity on substrates with double, nick, or gap flaps of distinct sequences and lengths; and DNA ligase I (LIG1) on long-patch base excision repair substrates. The 9-1-1 complex is necessary for the recruitment of RHNO1 to sites of double-stranded breaks (DSB) occurring during the S phase. This is Cell cycle checkpoint protein RAD1 (RAD1) from Homo sapiens (Human).